The sequence spans 313 residues: 4-diphosphocytidyl-2-C-methyl-D-erythritol kinase (313 aa).

K27 is an active-site residue. 110 to 120 contributes to the ATP binding site; sequence PIGGGVGGGSS. The active site involves D152.

The protein belongs to the GHMP kinase family. IspE subfamily.

The enzyme catalyses 4-CDP-2-C-methyl-D-erythritol + ATP = 4-CDP-2-C-methyl-D-erythritol 2-phosphate + ADP + H(+). Its pathway is isoprenoid biosynthesis; isopentenyl diphosphate biosynthesis via DXP pathway; isopentenyl diphosphate from 1-deoxy-D-xylulose 5-phosphate: step 3/6. Functionally, catalyzes the phosphorylation of the position 2 hydroxy group of 4-diphosphocytidyl-2C-methyl-D-erythritol. The sequence is that of 4-diphosphocytidyl-2-C-methyl-D-erythritol kinase from Histophilus somni (strain 129Pt) (Haemophilus somnus).